Consider the following 265-residue polypeptide: MMTTPIYVVDAFTNQAFKGNPAAVCVLPTSRDDIWMQHVASEMNLSETAFLHPYQDGYSLRWFTPNTEVDLCGHATLASAHILWELDHISAEQPITFYTKSGILTASKRGEWIELDFPSEQPKQENVYPNELIDGLGIQPLYVGRNRFDYLIEIDSEQRLKELNPNFSLLEQIDTRGIIVTSKSTSTEYDFISRCFFPAVGVNEDPVTGSAHCCLGPYWQEKLNKNEFLAYQASKRGGMLKIKLQHDRVFLLGQAVTVLRSELLL.

Residue Glu-47 is part of the active site.

Belongs to the PhzF family.

This is an uncharacterized protein from Halalkalibacterium halodurans (strain ATCC BAA-125 / DSM 18197 / FERM 7344 / JCM 9153 / C-125) (Bacillus halodurans).